The sequence spans 244 residues: Ras-like protein family member 11B (244 aa).

The interval 19 to 242 (PSSRVIKIAV…VLSAKVRTVT (224 aa)) is small GTPase-like. GTP contacts are provided by residues 30-37 (GGSGVGKT), 77-81 (DTPGV), and 142-145 (NKAD). The disordered stretch occupies residues 200-222 (INATSSVTEKKRSPLIPRPKSPN).

Belongs to the small GTPase superfamily. Ras family.

The catalysed reaction is GTP + H2O = GDP + phosphate + H(+). The protein is Ras-like protein family member 11B of Danio rerio (Zebrafish).